The following is a 79-amino-acid chain: MVEIVAGKQRAPVAAGVYNVYTGELADTATPTAARMGLEPPRFCAQCGRRMVVQVRPDGWWARCSRHGQVDSADLATQR.

Belongs to the BsaP family. The cofactor is iron-sulfur cluster.

Functionally, required for the activity of the biotin synthase BioB. The sequence is that of Biotin synthase auxiliary protein from Mycobacterium bovis (strain ATCC BAA-935 / AF2122/97).